Consider the following 473-residue polypeptide: mRNA export factor ICP27 homolog (473 aa).

Disordered regions lie at residues 57 to 81 (QELL…NSIY) and 123 to 143 (QTKR…NFPM). The Zn(2+) site is built by cysteine 362, histidine 438, cysteine 442, and cysteine 447. The segment at 362–447 (CKYGTEKRSM…HTRRCSDPAC (86 aa)) adopts a CHC2-type zinc-finger fold.

This sequence belongs to the HHV-1 ICP27 protein family. As to quaternary structure, associates in a complex with RNA, and host export factors NXF1/TAP and ALYREF; these interactions allow nuclear export of viral transcripts.

The protein localises to the host cytoplasm. It is found in the host nucleus. Multifunctional regulator of the expression of viral genes that mediates nuclear export of viral intronless mRNAs. This immediate early (EI) protein promotes the nuclear export of viral intronless mRNAs by interacting with mRNAs and host NXF1/TAP. The polypeptide is mRNA export factor ICP27 homolog (Gallus gallus (Chicken)).